A 727-amino-acid chain; its full sequence is Phenylalanine ammonia-lyase str11 (727 aa).

Y105 serves as the catalytic Proton donor/acceptor. The 5-imidazolinone (Ala-Gly) cross-link spans A210–G212. The residue at position 211 (S211) is a 2,3-didehydroalanine (Ser). (E)-cinnamate-binding residues include N271, Q361, R367, N397, K468, E496, and N499.

This sequence belongs to the PAL/histidase family. In terms of processing, contains an active site 4-methylidene-imidazol-5-one (MIO), which is formed autocatalytically by cyclization and dehydration of residues Ala-Ser-Gly.

The enzyme catalyses L-phenylalanine = (E)-cinnamate + NH4(+). It participates in mycotoxin biosynthesis. In terms of biological role, phenylalanine ammonia-lyase; part of the gene cluster that mediates the biosynthesis of strobilurin A, an antifungal polyketide that contains a key beta-methoxyacrylate toxophore that targets the complex III of the mitochondrial electron transport chain. Strobilurin biosynthesis begins with construction of benzoyl CoA by step-wise elimination of ammonia from phenylalanine by the phenylalanine ammonia-lyase str11, oxygenation by str8 and retro-Claisen reaction to form benzoic acid, which is activated to its CoA thiolester benzoyl CoA by the dedicated CoA ligase str10. Benzoyl CoA forms the starter unit for the highly reducing polyketide synthase stpks1 that produces the polyketide prestrobilutin A. The FAD-dependent oxygenase str9 then catalyzes the key oxidative rearrangement responsible for the creation of the beta-methoxyacrylate toxophore. Str9 performs epoxidation of the 2,3 olefin of prestrobilutin A, followed by Meinwald rearrangement to furnish the aldehyde intermediate. Rapid enolization of the aldehyde intermediate would give the beta-methoxyacrylate skeleton and methylations catalyzed by str2 and str3 complete the synthesis and lead to the production of strobilurin A. The short-chain dehydrogenase stl2 and the dehydrogenase str4 play a role in the shunt pathway leading to the production of bolineol. The cluster encodes no obvious halogenase gene that could be involved in production of strobilurin B, nor any obvious dimethylallyl-transferase that could be involved in the production of strobilurin G. It is possible that unknown proteins encoded in, or near, the cluster (such as str1 or stl1) may form new classes of halogenases or dimethylally-transferases, or that the responsible genes are located elsewhere on the genome. Similarly, proteins encoded by str5/str6 hydrolases appear to have no chemical role in the biosynthesis of strobilurin A. Finally, no obvious self-resistance gene is found within the cluster. This chain is Phenylalanine ammonia-lyase str11, found in Strobilurus tenacellus.